The following is a 111-amino-acid chain: TPR repeat-containing protein associated with Hsp90 (111 aa).

S2 carries the N-acetylserine modification. TPR repeat units follow at residues F4–N37 and V39–A71.

As to quaternary structure, component of the R2TP complex composed at least of RVB1, RVB2, TAH1 and PIH1. Also interacts with HSP90.

It is found in the cytoplasm. Its subcellular location is the nucleus. The chain is TPR repeat-containing protein associated with Hsp90 (TAH1) from Saccharomyces cerevisiae (strain ATCC 204508 / S288c) (Baker's yeast).